Here is a 779-residue protein sequence, read N- to C-terminus: Cysteine-rich protein 2-binding protein (779 aa).

The disordered stretch occupies residues 1–34 (MDSSIHLSGLLSRHDDDATRTSTSEGLEEGEVEG). Residue serine 4 is modified to Phosphoserine. Lysine 230 is modified (N6-acetyllysine). 3 disordered regions span residues 247–292 (SRNP…PVKF), 314–345 (LSSS…HSAT), and 360–457 (PPQA…GPRY). A compositionally biased stretch (basic and acidic residues) spans 255–275 (MELKEKRSRTQEAKDIRRAQK). The residue at position 284 (serine 284) is a Phosphoserine. Residue lysine 291 is modified to N6-acetyllysine. Low complexity predominate over residues 314 to 334 (LSSSDRTPLTSPSPSPSLDFS). Composition is skewed to basic and acidic residues over residues 402–423 (RAPE…RMDG) and 443–452 (KPPLEKDMKP). Residue serine 413 is modified to Phosphoserine. An N-acetyltransferase domain is found at 635–779 (LDYCYVRPNH…KHAFFLRLRR (145 aa)).

In terms of assembly, interacts with the LIM 1 domain of CSRP2. Component of the ADA2A-containing complex (ATAC), composed of CSRP2BP, KAT2A, TADA2L, TADA3L, ZZ3, MBIP, WDR5, YEATS2, CCDC101 and DR1. In the complex, it probably interacts directly with KAT2A, MBIP and WDR5.

Its subcellular location is the nucleus. It is found in the cytoplasm. Component of the ATAC complex, a complex with histone acetyltransferase activity on histones H3 and H4. May function as a scaffold for the ATAC complex to promote ATAC complex stability. Has also weak histone acetyltransferase activity toward histone H4. Required for the normal progression through G1 and G2/M phases of the cell cycle. This is Cysteine-rich protein 2-binding protein from Mus musculus (Mouse).